The primary structure comprises 484 residues: RuvB-like helicase 1 (484 aa).

Positions 1-11 (MSMAASSSTAT) are enriched in low complexity. The tract at residues 1-27 (MSMAASSSTATVQPSGIITQPPPPSTL) is disordered. Residue 87–94 (GPPGTGKT) coordinates ATP.

It belongs to the RuvB family. In terms of assembly, may form heterododecamers with RVB2. Component of the SWR1 chromatin remodeling complex, the INO80 chromatin remodeling complex, and of the R2TP complex.

It is found in the nucleus. The catalysed reaction is ATP + H2O = ADP + phosphate + H(+). DNA helicase which participates in several chromatin remodeling complexes, including the SWR1 and the INO80 complexes. The SWR1 complex mediates the ATP-dependent exchange of histone H2A for the H2A variant HZT1 leading to transcriptional regulation of selected genes by chromatin remodeling. The INO80 complex remodels chromatin by shifting nucleosomes and is involved in DNA repair. Also involved in pre-rRNA processing. This Cryptococcus neoformans var. neoformans serotype D (strain B-3501A) (Filobasidiella neoformans) protein is RuvB-like helicase 1 (RVB1).